We begin with the raw amino-acid sequence, 273 residues long: Epithelial sodium channel subunit beta (273 aa).

Topologically, residues 1-245 (NCYIFNWGQE…RSISESPTTN (245 aa)) are extracellular. 5 cysteine pairs are disulfide-bonded: Cys92–Cys179, Cys117–Cys175, Cys121–Cys171, Cys130–Cys157, and Cys132–Cys146. Residues 246–273 (VVWLLSNLGGQFGFWMGGSVLCIIEFGE) form a helical membrane-spanning segment.

This sequence belongs to the amiloride-sensitive sodium channel (TC 1.A.6) family. SCNN1B subfamily. As to quaternary structure, component of the heterotrimeric epithelial sodium channel (ENaC) composed of an alpha/SCNN1A, a beta/SCNN1B and a gamma/SCNN1G subunit.

The protein localises to the apical cell membrane. It localises to the cytoplasmic vesicle membrane. The catalysed reaction is Na(+)(in) = Na(+)(out). Originally identified and characterized by its inhibition by the diuretic drug amiloride. In terms of biological role, this is one of the three pore-forming subunits of the heterotrimeric epithelial sodium channel (ENaC), a critical regulator of sodium balance and fluid homeostasis. ENaC operates in epithelial tissues, where it mediates the electrodiffusion of sodium ions from extracellular fluid through the apical membrane of cells, with water following osmotically. It plays a key role in maintaining sodium homeostasis through electrogenic sodium reabsorption in the kidneys. Additionally, ENaC is essential for airway surface liquid homeostasis, which is crucial for proper mucus clearance. The sequence is that of Epithelial sodium channel subunit beta from Aquarana catesbeiana (American bullfrog).